A 282-amino-acid chain; its full sequence is Bifunctional protein FolD (282 aa).

Residues 165 to 167 (GAS) and Ile-231 each bind NADP(+).

Belongs to the tetrahydrofolate dehydrogenase/cyclohydrolase family. Homodimer.

The catalysed reaction is (6R)-5,10-methylene-5,6,7,8-tetrahydrofolate + NADP(+) = (6R)-5,10-methenyltetrahydrofolate + NADPH. It carries out the reaction (6R)-5,10-methenyltetrahydrofolate + H2O = (6R)-10-formyltetrahydrofolate + H(+). Its pathway is one-carbon metabolism; tetrahydrofolate interconversion. Catalyzes the oxidation of 5,10-methylenetetrahydrofolate to 5,10-methenyltetrahydrofolate and then the hydrolysis of 5,10-methenyltetrahydrofolate to 10-formyltetrahydrofolate. The sequence is that of Bifunctional protein FolD from Francisella tularensis subsp. tularensis (strain FSC 198).